The primary structure comprises 430 residues: Delta(14)-sterol reductase (430 aa).

Helical transmembrane passes span 12–32, 67–87, 109–129, 230–250, 267–287, and 290–310; these read IGTGVLMLILPPISHYLHFLI, LAVAAYYLLLVALMYVLPAEI, FLVFFTFLGTMTVLEGPTWWF, FVSDSIVLVNLFETWYVVDAL, LGVMLLFGNAVWVPFMYCLQA, and LASFPVHLGLLGIAGVLAVQF. NADP(+) is bound by residues Lys323, Arg327, Leu350, Trp355, and 362-363; that span reads NY. 2 helical membrane-spanning segments follow: residues 349–369 and 376–396; these read LLISGWWGVARHVNYFGDWIM and TTGFNTPLTYFYVIYFGILLL. Residues Asp402, 406–410, and Tyr417 each bind NADP(+); that span reads CREKY.

It belongs to the ERG4/ERG24 family.

It is found in the membrane. The enzyme catalyses 4,4-dimethyl-5alpha-cholesta-8,24-dien-3beta-ol + NADP(+) = 4,4-dimethyl-5alpha-cholesta-8,14,24-trien-3beta-ol + NADPH + H(+). The protein operates within steroid biosynthesis; zymosterol biosynthesis; zymosterol from lanosterol: step 2/6. Reduces the C14=C15 double bond of 4,4-dimethyl-cholesta-8,14,24-trienol to produce 4,4-dimethyl-cholesta-8,24-dienol. The chain is Delta(14)-sterol reductase (ERG3) from Ascobolus immersus.